A 473-amino-acid chain; its full sequence is Cannabinoid receptor 1 (473 aa).

Topologically, residues 1 to 118 (MKSILDGLAD…CFMILNPSQQ (118 aa)) are extracellular. Residues 2-23 (KSILDGLADTTFRTITTDLLYV) are required for mitochondrial localization. N-linked (GlcNAc...) asparagine glycans are attached at residues Asn79 and Asn85. Residues 119-144 (LAIAVLSLTLGTFTVLENLLVLCVIL) traverse the membrane as a helical segment. At 145–156 (HSRSLRCRPSYH) the chain is on the cytoplasmic side. Residues 157 to 177 (FIGSLAVADLLGSVIFVYSFV) form a helical membrane-spanning segment. Topologically, residues 178 to 189 (DFHVFHRKDSPN) are extracellular. A helical transmembrane segment spans residues 190-214 (VFLFKLGGVTASFTASVGSLFLTAI). The Cytoplasmic portion of the chain corresponds to 215 to 234 (DRYISIHRPLAYKRIVTRPK). The chain crosses the membrane as a helical span at residues 235-257 (AVVAFCVMWTIAIVIAVLPLLGW). Residues 258 to 275 (NCKKLNSVCSDIFPLIDE) lie on the Extracellular side of the membrane. Residues 276 to 301 (TYLMFWIGVTSILLLFIVYAYMYILW) form a helical membrane-spanning segment. At 302 to 346 (KAHSHAVRMLQRGTQKSIIIQSTEDGKVQITRPDQTRMDIRLAKT) the chain is on the cytoplasmic side. Residues 347–367 (LVLILVVLIICWGPLLAIMVY) form a helical membrane-spanning segment. Residues 368-379 (DVFGKMNKLIKT) lie on the Extracellular side of the membrane. A helical membrane pass occupies residues 380–401 (IFAFCSMLCLLNSTVNPIIYAL). Residues 402–473 (RSKDLRHAFR…VSTDTTAEAL (72 aa)) are Cytoplasmic-facing. The S-palmitoyl cysteine moiety is linked to residue Cys417.

The protein belongs to the G-protein coupled receptor 1 family. Palmitoylation at Cys-417 is important for recruitment at both plasma membrane and lipid rafts and association with G protein alpha subunits.

The protein localises to the cell membrane. It localises to the mitochondrion outer membrane. The protein resides in the cell projection. Its subcellular location is the axon. It is found in the presynapse. G-protein coupled receptor for cannabinoids. Mediates many cannabinoid-induced effects in the central nervous system (CNS), as well as in peripheral tissues. Regulates cellular respiration and energy production in response to cannabinoids. Signaling typically involves reduction in cyclic AMP. The sequence is that of Cannabinoid receptor 1 (CNR1) from Taeniopygia guttata (Zebra finch).